A 574-amino-acid polypeptide reads, in one-letter code: MEMLSGAEMVVRSLIDQGVKQVFGYPGGAVLDIYDALHTVGGIDHVLVRHEQAAVHMADGLARATGEVGVVLVTSGPGATNAITGIATAYMDSIPLVVLSGQVATSLIGYDAFQECDMVGISRPVVKHSFLVKQTEDIPQVLKKAFWLAASGRPGPVVVDLPKDILNPANKLPYVWPESVSMRSYNPTTTGHKGQIKRALQTLVAAKKPVVYVGGGAITAGCHQQLKETVEALNLPVVCSLMGLGAFPATHRQALGMLGMHGTYEANMTMHNADVIFAVGVRFDDRTTNNLAKYCPNATVLHIDIDPTSISKTVTADIPIVGDARQVLEQMLELLSQESAHQPLDEIRDWWQQIEQWRARQCLKYDTHSEKIKPQAVIETLWRLTKGDAYVTSDVGQHQMFAALYYPFDKPRRWINSGGLGTMGFGLPAALGVKMALPEETVVCVTGDGSIQMNIQELSTALQYELPVLVVNLNNRYLGMVKQWQDMIYSGRHSQSYMQSLPDFVRLAEAYGHVGIQISHPHELESKLSEALEQVRNNRLVFVDVTVDGSEHVYPMQIRGGGMDEMWLSKTERT.

Glutamate 51 serves as a coordination point for thiamine diphosphate. Residues arginine 153, 261–282 (HGTY…VGVR), and 304–323 (DIDP…IVGD) contribute to the FAD site. The tract at residues 397-477 (QHQMFAALYY…VLVVNLNNRY (81 aa)) is thiamine pyrophosphate binding. Residues aspartate 448 and asparagine 475 each contribute to the Mg(2+) site.

This sequence belongs to the TPP enzyme family. In terms of assembly, dimer of large and small chains. The cofactor is Mg(2+). It depends on thiamine diphosphate as a cofactor.

The catalysed reaction is 2 pyruvate + H(+) = (2S)-2-acetolactate + CO2. It participates in amino-acid biosynthesis; L-isoleucine biosynthesis; L-isoleucine from 2-oxobutanoate: step 1/4. Its pathway is amino-acid biosynthesis; L-valine biosynthesis; L-valine from pyruvate: step 1/4. Its activity is regulated as follows. Sensitive to valine inhibition. The protein is Acetolactate synthase isozyme 3 large subunit (ilvI) of Escherichia coli (strain K12).